Reading from the N-terminus, the 325-residue chain is Probable arylamine N-acetyltransferase 1 (325 aa).

Cys72 (acyl-thioester intermediate) is an active-site residue. Residues His112 and Asp127 contribute to the active site.

This sequence belongs to the arylamine N-acetyltransferase family.

It carries out the reaction an arylamine + acetyl-CoA = an N-acetylarylamine + CoA. The polypeptide is Probable arylamine N-acetyltransferase 1 (Dictyostelium discoideum (Social amoeba)).